A 214-amino-acid chain; its full sequence is Rhodanese-like domain-containing protein 10 (214 aa).

The region spanning 58 to 182 (ASEGYILLDV…VSEGDFPEIE (125 aa)) is the Rhodanese domain. Cys-142 acts as the Cysteine persulfide intermediate in catalysis. A helical transmembrane segment spans residues 190 to 206 (ATIGGVSFYLLKLLVLL).

The protein localises to the membrane. In Arabidopsis thaliana (Mouse-ear cress), this protein is Rhodanese-like domain-containing protein 10 (STR10).